We begin with the raw amino-acid sequence, 543 residues long: Carboxypeptidase Y homolog A (543 aa).

The signal sequence occupies residues 1-17; that stretch reads MRVLPATLLVGAATAAV. Residues 18 to 124 constitute a propeptide that is removed on maturation; that stretch reads PPFQQILGLP…KLEAYDLRVK (107 aa). Disulfide bonds link Cys-179–Cys-419, Cys-313–Cys-327, Cys-337–Cys-360, Cys-344–Cys-353, and Cys-382–Cys-389. A glycan (N-linked (GlcNAc...) asparagine) is linked at Asn-210. Ser-266 is an active-site residue. Asp-458 is a catalytic residue. N-linked (GlcNAc...) asparagine glycosylation occurs at Asn-509. His-520 is an active-site residue.

Belongs to the peptidase S10 family.

It localises to the vacuole. The catalysed reaction is Release of a C-terminal amino acid with broad specificity.. Vacuolar carboxypeptidase involved in degradation of small peptides. Digests preferentially peptides containing an aliphatic or hydrophobic residue in P1' position, as well as methionine, leucine or phenylalanine in P1 position of ester substrate. This Aspergillus clavatus (strain ATCC 1007 / CBS 513.65 / DSM 816 / NCTC 3887 / NRRL 1 / QM 1276 / 107) protein is Carboxypeptidase Y homolog A (cpyA).